Reading from the N-terminus, the 948-residue chain is MQEIRIRGAREHNLKNINVDIPRDQLVVITGLSGSGKSSLAFDTIYAEGQRRYVESLSAYARQFLGQMEKPDLDLIEGLSPAISIEQKTTHRNPRSTVGTVTEIYDYLRLLYARVGKPHCPECGTPIQSMSIDQITARVLAFPQGSKLQILAPVISGKKGEHKDVLEKIRKDGFNRVRINGEIRTLEEEIVLKKNFKTSIEIVVDRIVMKEGIRSRLADSVETALKQSEGLVILDDGSKDHILSQKMACPNGHDIGFTELSPRMFSFNSPYGACETCDGLGSLLEFDEDLLVNDPELSLVDGCIEAWAGSKSNGFWFMATLKSLSDSLKFKMNTPWKDLPEKTRQTILYGDKKIKIEYDFRGANSHYEFTKEYEGVIPNLQRRYKETKSDSMRQWFESYMTNHPCPSCKGKRLKRESLSVKVHNVPVDEFTSYSIEKALNFVQNLKVTGAEEIIAKPILKEIHQRLSFLNDVGVGYLTLERSAGSLSGGEAQRIRLATQIGSRLMGVLYILDEPSIGLHQRDNTKLVSTLKNLRDLGNTVLVVEHDQETMEESDWLIDMGPGAGVHGGSIVCAGTPAEVSKHKNSLTGKYLSGRLKVPIPAKLREGNGSKLQIIGAKENNLKNIDVNIPLGKLVVITGVSGSGKSTLINDILYNAAAHKVMKMKTLAGKHKTIKGFENIDKIINIDQSPIGRTPRSNPATYTGLFTPIREMFAGLEEAKLRGYGPGRFSFNVSGGRCETCEGDGILKIEMHFLPDVYVTCEVCKGKRYNQETLEVRYKGKNIFDVLEMTVEDANQFFENIPIVKRKLETLLEVGLGYIRLGQPATTFSGGEAQRIKLATELSKRPTGKTLYILDEPTTGLHFEDVRRLSEVLHTLVDRGNSMIVIEHNLDVIKQADWIVDMGPEGGDGGGLVIAEGIPKDIAKIKNSYTGQYLKKIFTSSEKISRKTK.

31–38 (GLSGSGKS) serves as a coordination point for ATP. Residues 249–277 (CPNGHDIGFTELSPRMFSFNSPYGACETC) form a C4-type zinc finger. ABC transporter domains follow at residues 307-586 (WAGS…KNSL) and 606-934 (GNGS…QYLK). 638-645 (GVSGSGKS) provides a ligand contact to ATP. Residues 737–763 (CETCEGDGILKIEMHFLPDVYVTCEVC) form a C4-type zinc finger.

The protein belongs to the ABC transporter superfamily. UvrA family. As to quaternary structure, forms a heterotetramer with UvrB during the search for lesions.

The protein resides in the cytoplasm. Its function is as follows. The UvrABC repair system catalyzes the recognition and processing of DNA lesions. UvrA is an ATPase and a DNA-binding protein. A damage recognition complex composed of 2 UvrA and 2 UvrB subunits scans DNA for abnormalities. When the presence of a lesion has been verified by UvrB, the UvrA molecules dissociate. The sequence is that of UvrABC system protein A from Leptospira interrogans serogroup Icterohaemorrhagiae serovar copenhageni (strain Fiocruz L1-130).